The following is a 198-amino-acid chain: Holliday junction resolvase RecU (198 aa).

The tract at residues 1-29 (MIRYPNGKSYQPKTAASSLQKKPSYSNRG) is disordered. The span at 8–29 (KSYQPKTAASSLQKKPSYSNRG) shows a compositional bias: polar residues. Mg(2+) contacts are provided by Thr-83, Asp-85, Glu-98, and Gln-117.

It belongs to the RecU family. Requires Mg(2+) as cofactor.

The protein localises to the cytoplasm. The catalysed reaction is Endonucleolytic cleavage at a junction such as a reciprocal single-stranded crossover between two homologous DNA duplexes (Holliday junction).. Functionally, endonuclease that resolves Holliday junction intermediates in genetic recombination. Cleaves mobile four-strand junctions by introducing symmetrical nicks in paired strands. Promotes annealing of linear ssDNA with homologous dsDNA. Required for DNA repair, homologous recombination and chromosome segregation. This is Holliday junction resolvase RecU from Bacillus licheniformis (strain ATCC 14580 / DSM 13 / JCM 2505 / CCUG 7422 / NBRC 12200 / NCIMB 9375 / NCTC 10341 / NRRL NRS-1264 / Gibson 46).